Consider the following 383-residue polypeptide: Guanine nucleotide-binding protein G(s) subunit alpha (383 aa).

Positions 1-31 (MGCFGSAGSKQSDSNSSEDTKSQKRRSDAIT) are disordered. Gly2 is lipidated: N-palmitoyl glycine. Cys3 is lipidated: S-palmitoyl cysteine. Over residues 8 to 17 (GSKQSDSNSS) the composition is skewed to polar residues. A compositionally biased stretch (basic and acidic residues) spans 18 to 31 (EDTKSQKRRSDAIT). Residues 43–383 (ATHRLLLLGA…RMHLRQYELL (341 aa)) enclose the G-alpha domain. The interval 46–59 (RLLLLGAGESGKST) is G1 motif. GTP contacts are provided by residues 51–58 (GAGESGKS), 187–193 (LRCRVLT), 212–216 (DVGGQ), 281–284 (NKQD), and Ala355. Residues Ser58 and Thr193 each contribute to the Mg(2+) site. A G2 motif region spans residues 185–193 (DILRCRVLT). The interval 208–217 (FHMFDVGGQR) is G3 motif. Positions 277 to 284 (ILFLNKQD) are G4 motif. Residues 353–358 (TCAVDT) form a G5 motif region.

Belongs to the G-alpha family. G(s) subfamily. In terms of assembly, g proteins are composed of 3 units; alpha, beta and gamma. The alpha chain contains the guanine nucleotide binding site.

Guanine nucleotide-binding proteins (G proteins) are involved as modulators or transducers in various transmembrane signaling systems. The G(s) protein is involved in hormonal regulation of adenylate cyclase: it activates the cyclase. Participates in olfactory signal transduction. The polypeptide is Guanine nucleotide-binding protein G(s) subunit alpha (Anopheles gambiae (African malaria mosquito)).